The primary structure comprises 266 residues: Phosphate import ATP-binding protein PstB (266 aa).

Positions V15–I261 constitute an ABC transporter domain. G50 to S57 serves as a coordination point for ATP.

This sequence belongs to the ABC transporter superfamily. Phosphate importer (TC 3.A.1.7) family. As to quaternary structure, the complex is composed of two ATP-binding proteins (PstB), two transmembrane proteins (PstC and PstA) and a solute-binding protein (PstS).

It localises to the cell inner membrane. The enzyme catalyses phosphate(out) + ATP + H2O = ADP + 2 phosphate(in) + H(+). In terms of biological role, part of the ABC transporter complex PstSACB involved in phosphate import. Responsible for energy coupling to the transport system. This Nitrosomonas europaea (strain ATCC 19718 / CIP 103999 / KCTC 2705 / NBRC 14298) protein is Phosphate import ATP-binding protein PstB.